We begin with the raw amino-acid sequence, 309 residues long: Homoserine kinase (309 aa).

91-101 (PIGSGLGSSAC) is an ATP binding site.

The protein belongs to the GHMP kinase family. Homoserine kinase subfamily.

The protein localises to the cytoplasm. It carries out the reaction L-homoserine + ATP = O-phospho-L-homoserine + ADP + H(+). The protein operates within amino-acid biosynthesis; L-threonine biosynthesis; L-threonine from L-aspartate: step 4/5. Its function is as follows. Catalyzes the ATP-dependent phosphorylation of L-homoserine to L-homoserine phosphate. This chain is Homoserine kinase (thrB), found in Serratia marcescens.